Consider the following 1085-residue polypeptide: Activating transcription factor 7-interacting protein 1 (1085 aa).

Disordered stretches follow at residues 1–22 (MDNT…RASD), 47–109 (GKHE…VNVT), 127–245 (LGSN…NTDS), 329–381 (PNKS…VHSK), 469–499 (AAKE…ANAN), 517–560 (RNVG…TSSP), 650–843 (ASTN…TTIH), 889–910 (NSVR…QTGS), and 932–975 (GAPQ…ANTS). A compositionally biased stretch (polar residues) spans 54–64 (SDLNSPLSNTD). Composition is skewed to basic and acidic residues over residues 82–91 (SEIKRPESRA) and 133–150 (NFHE…RESD). Polar residues-rich tracts occupy residues 151-165 (TPSG…NSFS) and 173-182 (NDITIISNSP). Basic and acidic residues-rich tracts occupy residues 347 to 379 (EREV…DSVH) and 469 to 479 (AAKEDMKKKQE). The stretch at 446–480 (NKRHKTVLTELQAKITRLTKRFGAAKEDMKKKQEN) forms a coiled coil. 3 stretches are compositionally biased toward low complexity: residues 487–499 (SSGK…ANAN), 529–547 (APVS…TPAS), and 651–666 (STNT…VSSP). Positions 667–717 (GVQRNSPASAGSVRTTLAVQAVSTTHPVAQTTRTSLPTVGTSGLHNSTSSR) are enriched in polar residues. Residues 732 to 743 (TAPTEPPTITAP) show a composition bias toward low complexity. 3 stretches are compositionally biased toward polar residues: residues 746–775 (ENQT…VTGS), 792–810 (SSQA…AQSI), and 830–843 (TGVP…TTIH). The span at 950–968 (PRPVHPAPLPEAPQPPRLP) shows a compositional bias: pro residues. The 107-residue stretch at 976–1082 (LPQKPQLKLA…DPQSTDVISS (107 aa)) folds into the Fibronectin type-III domain.

It belongs to the MCAF family.

The protein resides in the nucleus. In terms of biological role, recruiter that couples transcriptional factors to general transcription apparatus and thereby modulates transcription regulation and chromatin formation. Can both act as an activator or a repressor depending on the context. Mediates MBD1-dependent transcriptional repression, probably by recruiting complexes containing histone methyltransferase activity. May belong to a complex that represses transcription and couples DNA methylation and histone H3 'Lys-9' trimethylation (H3K9me3). This Gallus gallus (Chicken) protein is Activating transcription factor 7-interacting protein 1 (ATF7IP).